The sequence spans 658 residues: Glycogen debranching enzyme (658 aa).

The active-site Nucleophile is the aspartate 336. The Proton donor role is filled by glutamate 371. Residues 459–484 (EANGEENRDGTNSNYSDNHGKEGLGG) are disordered.

It belongs to the glycosyl hydrolase 13 family.

It carries out the reaction Hydrolysis of (1-&gt;6)-alpha-D-glucosidic linkages to branches with degrees of polymerization of three or four glucose residues in limit dextrin.. It functions in the pathway glycan degradation; glycogen degradation. Its function is as follows. Removes maltotriose and maltotetraose chains that are attached by 1,6-alpha-linkage to the limit dextrin main chain, generating a debranched limit dextrin. This Salmonella paratyphi B (strain ATCC BAA-1250 / SPB7) protein is Glycogen debranching enzyme.